The sequence spans 418 residues: NADH-quinone oxidoreductase subunit D (418 aa).

The protein belongs to the complex I 49 kDa subunit family. In terms of assembly, NDH-1 is composed of 14 different subunits. Subunits NuoB, C, D, E, F, and G constitute the peripheral sector of the complex.

The protein localises to the cell inner membrane. The catalysed reaction is a quinone + NADH + 5 H(+)(in) = a quinol + NAD(+) + 4 H(+)(out). In terms of biological role, NDH-1 shuttles electrons from NADH, via FMN and iron-sulfur (Fe-S) centers, to quinones in the respiratory chain. The immediate electron acceptor for the enzyme in this species is believed to be ubiquinone. Couples the redox reaction to proton translocation (for every two electrons transferred, four hydrogen ions are translocated across the cytoplasmic membrane), and thus conserves the redox energy in a proton gradient. The sequence is that of NADH-quinone oxidoreductase subunit D from Neisseria meningitidis serogroup C / serotype 2a (strain ATCC 700532 / DSM 15464 / FAM18).